A 322-amino-acid chain; its full sequence is Acetylglutamate kinase (322 aa).

Substrate-binding positions include 89 to 90 (GG), Arg-111, and Asn-217.

Belongs to the acetylglutamate kinase family. ArgB subfamily.

It localises to the cytoplasm. The catalysed reaction is N-acetyl-L-glutamate + ATP = N-acetyl-L-glutamyl 5-phosphate + ADP. It functions in the pathway amino-acid biosynthesis; L-arginine biosynthesis; N(2)-acetyl-L-ornithine from L-glutamate: step 2/4. Functionally, catalyzes the ATP-dependent phosphorylation of N-acetyl-L-glutamate. The protein is Acetylglutamate kinase of Ehrlichia ruminantium (strain Welgevonden).